A 344-amino-acid polypeptide reads, in one-letter code: Heat-inducible transcription repressor HrcA (344 aa).

The protein belongs to the HrcA family.

Functionally, negative regulator of class I heat shock genes (grpE-dnaK-dnaJ and groELS operons). Prevents heat-shock induction of these operons. This chain is Heat-inducible transcription repressor HrcA, found in Geobacillus kaustophilus (strain HTA426).